We begin with the raw amino-acid sequence, 241 residues long: Small ribosomal subunit protein uS2 (241 aa).

Belongs to the universal ribosomal protein uS2 family.

The sequence is that of Small ribosomal subunit protein uS2 from Citrobacter koseri (strain ATCC BAA-895 / CDC 4225-83 / SGSC4696).